The chain runs to 178 residues: Large ribosomal subunit protein uL6 (178 aa).

This sequence belongs to the universal ribosomal protein uL6 family. As to quaternary structure, part of the 50S ribosomal subunit.

Its function is as follows. This protein binds to the 23S rRNA, and is important in its secondary structure. It is located near the subunit interface in the base of the L7/L12 stalk, and near the tRNA binding site of the peptidyltransferase center. The polypeptide is Large ribosomal subunit protein uL6 (Enterococcus faecalis (strain ATCC 700802 / V583)).